A 400-amino-acid polypeptide reads, in one-letter code: MSTNQQQQANPSAAVAAPAASSEYLKRTCLICGCHTNQTINIYEPRSGPNIVQLIQAKFKFQPLNEDKFLCFSCNNWLINWHSLQAVNSNEAESQSQSPSHMGNSVLQQERTKLRPVAMVRPTVRVQPQSQPQLQPQVPINPTPAPIVYSKRRASRRSASVSRMSRVLRQCCVESLRRSPKKRNQQSVFVCLRPQGQKRSNAICKVECVAPRRKPVERLVKDVAATATPTPVLNTQSTPTYQRFPQPSVDGKVVAMFRRLGTTLSREEPAAYSAESNPACSKLPQIMSPLKEAPRWTRDLDDDEILLEFDTAISEVLPTARYQVTHEENKENQQAQEMELELEEEEEVDGRAELEVVQEAEAPLEPQSHHKQGNSHQNSHQASIQLAGLRLPMGLSISLV.

The segment at 109–127 is interaction with sina; sequence QERTKLRPVAMVRPTVRVQ. The segment at 125–145 is disordered; sequence RVQPQSQPQLQPQVPINPTPA. The span at 127–138 shows a compositional bias: low complexity; sequence QPQSQPQLQPQV. The interaction with ttk stretch occupies residues 241-320; that stretch reads YQRFPQPSVD…TAISEVLPTA (80 aa). The stretch at 319–362 forms a coiled coil; it reads TARYQVTHEENKENQQAQEMELELEEEEEVDGRAELEVVQEAEA. A disordered region spans residues 346-382; the sequence is EEVDGRAELEVVQEAEAPLEPQSHHKQGNSHQNSHQA.

As to quaternary structure, component of some E3 complex at least composed of sina, ebi and phyl, required for the degradation of ttk. In terms of tissue distribution, in embryos, it is ubiquitously present before cellularization. During stages 9-11, it is expressed in neuroblasts and the SOP cells. From stage 12 onward, it decreases, but remains in a subset of PNS cells at stages 12-14. Weakly expressed in wing imaginal disks, in the SOP cells of wing margin bristles, notal macrochaetes, and other sensory organs. In leg disks, it is expressed in the precursors of the femoral chordotonal organs, as well as in external sensory SOP cells. Strongly expressed in the eye-antenna disk, it is specifically expressed in R1, R6 and R7 cells, and not in R3, R3, R4, R5 and R8 cells.

Its subcellular location is the nucleus. In terms of biological role, essential adapter component of E3 ubiquitin ligase complexes; involved in R7 photoreceptor cell differentiation, embryonic nervous system, external sensory organ development and specification of particular muscles. E3 ubiquitin ligase complexes mediate ubiquitination and subsequent proteasomal degradation of target proteins. Required for specification of R7 photoreceptor cell fate in the eye by participating in the ubiquitination and subsequent proteasomal degradation of Tramtrack (ttk), a general inhibitor of photoreceptor differentiation. Acts downstream of Notch signaling to specify the fate of the SOP (sensory organ precursor) cells and their progeny, probably via the sina-mediated proteasomal degradation of ttk. Its restricted pattern of expression, upon Notch and Ras signaling pathways, suggests that it acts as a key determinant in E3 complexes to trigger protein proteolysis in appropriate cells. This is Protein phyllopod (phyl) from Drosophila melanogaster (Fruit fly).